The sequence spans 357 residues: DNA integrity scanning protein DisA (357 aa).

A DAC domain is found at 8-148 (PQELIEKIKL…NYKYVVNQVD (141 aa)). 3',3'-c-di-AMP contacts are provided by G76, L94, T107, T111, and R128.

This sequence belongs to the DisA family. As to quaternary structure, homooctamer. Requires Mg(2+) as cofactor.

It catalyses the reaction 2 ATP = 3',3'-c-di-AMP + 2 diphosphate. Its activity is regulated as follows. Inhibited by 3'-dATP. Its function is as follows. Participates in a DNA-damage check-point. DisA forms globular foci that rapidly scan along the chromosomes searching for lesions. Has diadenylate cyclase activity, catalyzing the condensation of 2 ATP molecules into cyclic di-AMP (c-di-AMP). c-di-AMP likely acts as a signaling molecule that may couple DNA integrity with a cellular process. This rate-limiting step is the accessibility of the active site; mutating the possible exit tunnel (residues 128-130) increases product 2-fold despite Arg-130 being important for ATP-binding. Does not convert GTP to c-di-GMP. In Thermotoga maritima (strain ATCC 43589 / DSM 3109 / JCM 10099 / NBRC 100826 / MSB8), this protein is DNA integrity scanning protein DisA.